The sequence spans 576 residues: Arginine--tRNA ligase (576 aa).

A 'HIGH' region motif is present at residues 126 to 136 (ANPTGPMHIGH).

This sequence belongs to the class-I aminoacyl-tRNA synthetase family. As to quaternary structure, monomer.

The protein resides in the cytoplasm. It carries out the reaction tRNA(Arg) + L-arginine + ATP = L-arginyl-tRNA(Arg) + AMP + diphosphate. The protein is Arginine--tRNA ligase of Rickettsia peacockii (strain Rustic).